A 181-amino-acid chain; its full sequence is Ribonuclease HII (181 aa).

One can recognise an RNase H type-2 domain in the interval 1-181; it reads MICGIDEVGR…SLHRKSFQLI (181 aa). 3 residues coordinate a divalent metal cation: Asp-6, Glu-7, and Asp-98.

It belongs to the RNase HII family. Mn(2+) is required as a cofactor. Mg(2+) serves as cofactor.

The protein localises to the cytoplasm. The enzyme catalyses Endonucleolytic cleavage to 5'-phosphomonoester.. Its function is as follows. Endonuclease that specifically degrades the RNA of RNA-DNA hybrids. This chain is Ribonuclease HII, found in Borrelia duttonii (strain Ly).